We begin with the raw amino-acid sequence, 184 residues long: Probable archaeosortase E (184 aa).

The next 4 membrane-spanning stretches (helical) occupy residues 27–47, 86–106, 114–134, and 151–171; these read ILFL…LSYF, VVEE…IIVY, IIGI…IVLI, and IAGY…YLKI. Residue Cys90 is the Acyl-thioester intermediate of the active site. Arg130 (proton donor) is an active-site residue.

Belongs to the exosortase/archaeosortase family. Archaeosortase E subfamily.

It is found in the cell membrane. In terms of biological role, transpeptidase that recognizes and modifies its substrate by proteolytic cleavage of a sorting signal. Following cleavage, a covalent intermediate is formed via a thioester bond between the archaeosortase and its substrate, which is then transferred and covalently attached to the cell membrane. The chain is Probable archaeosortase E from Methanocaldococcus jannaschii (strain ATCC 43067 / DSM 2661 / JAL-1 / JCM 10045 / NBRC 100440) (Methanococcus jannaschii).